The sequence spans 247 residues: ATP synthase subunit a, chloroplastic (247 aa).

5 helical membrane passes run 38-58 (QVLI…IIAV), 95-115 (VPFI…GALL), 134-154 (INTT…AGLT), 199-219 (LVVV…VMFL), and 220-240 (GLFT…AYIG).

Belongs to the ATPase A chain family. In terms of assembly, F-type ATPases have 2 components, CF(1) - the catalytic core - and CF(0) - the membrane proton channel. CF(1) has five subunits: alpha(3), beta(3), gamma(1), delta(1), epsilon(1). CF(0) has four main subunits: a, b, b' and c.

Its subcellular location is the plastid. It localises to the chloroplast thylakoid membrane. Its function is as follows. Key component of the proton channel; it plays a direct role in the translocation of protons across the membrane. This is ATP synthase subunit a, chloroplastic from Morus indica (Mulberry).